The sequence spans 272 residues: NADH-dependent L-xylulose reductase (272 aa).

Leu24 and Asp78 together coordinate NADP(+). Ser160 (proton donor) is an active-site residue. Residues Tyr175, Lys179, and Ile208 each contribute to the NADP(+) site. Tyr175 (proton acceptor) is an active-site residue. Catalysis depends on Lys179, which acts as the Lowers pKa of active site Tyr.

Belongs to the short-chain dehydrogenases/reductases (SDR) family.

The catalysed reaction is xylitol + NAD(+) = L-xylulose + NADH + H(+). It catalyses the reaction D-arabinitol + NAD(+) = D-ribulose + NADH + H(+). Functionally, NADH-dependent L-xylulose reductase; part of the yeast pathway for L-arabinose catabolism. Reversibly converts L-xylulose to xylitol and D-ribulose to D-arabinitol. It has a much lower activity with D-xylulose. Sugar alcohols can serve as a substrate when the hydroxyl group of C-2 is in the L- and the hydroxyl group of the C-3 is in the D-configuration. Also seems to be specific for sugar alcohols that have not more than 5 carbons since no activity is observed with dulcitol (galactitol), which has the hydroxyl group of C-2 in L- and of C-3 in D-configuration, but is a six-carbon sugar alcohol. The polypeptide is NADH-dependent L-xylulose reductase (Ambrosiozyma monospora (Yeast)).